A 162-amino-acid chain; its full sequence is Cytochrome c-type biogenesis protein CcmE (162 aa).

Over 1-8 the chain is Cytoplasmic; the sequence is MNPRRKKR. Residues 9–29 traverse the membrane as a helical; Signal-anchor for type II membrane protein segment; sequence LTLAVALIGGVAAIASLLLYA. Residues 30–162 lie on the Periplasmic side of the membrane; the sequence is LNSNLNLFYT…YSQQKAPDTK (133 aa). 2 residues coordinate heme: His-131 and Tyr-135. A disordered region spans residues 139–162; it reads EVAEAMGQKHEKLDYSQQKAPDTK. The segment covering 153-162 has biased composition (polar residues); it reads YSQQKAPDTK.

Belongs to the CcmE/CycJ family.

It is found in the cell inner membrane. In terms of biological role, heme chaperone required for the biogenesis of c-type cytochromes. Transiently binds heme delivered by CcmC and transfers the heme to apo-cytochromes in a process facilitated by CcmF and CcmH. The protein is Cytochrome c-type biogenesis protein CcmE of Shewanella putrefaciens (strain CN-32 / ATCC BAA-453).